A 129-amino-acid polypeptide reads, in one-letter code: Succinate dehydrogenase cytochrome b556 subunit (129 aa).

The Cytoplasmic segment spans residues 1–26; the sequence is MIRNVKKQRPVNLDLQTIRFPITAIA. A helical membrane pass occupies residues 27–52; the sequence is SILHRVSGVITFIAVGILLWLLGTSL. Topologically, residues 53 to 68 are periplasmic; it reads SSPEGFQQAADIMDGF. A helical membrane pass occupies residues 69 to 89; the sequence is IVKFIMWGILTALAYHVIVGI. H84 provides a ligand contact to heme. Residues 90–108 are Cytoplasmic-facing; the sequence is RHMLMDFGYLEETFEAGQR. Residues 109–129 form a helical membrane-spanning segment; it reads SAKISFVITVVLSLLAGVLVW.

The protein belongs to the cytochrome b560 family. As to quaternary structure, part of an enzyme complex containing four subunits: a flavoprotein, an iron-sulfur protein, plus two membrane-anchoring proteins, SdhC and SdhD. The complex can form homotrimers. Heme serves as cofactor.

It is found in the cell inner membrane. The protein operates within carbohydrate metabolism; tricarboxylic acid cycle. Functionally, membrane-anchoring subunit of succinate dehydrogenase (SDH). In Salmonella typhi, this protein is Succinate dehydrogenase cytochrome b556 subunit (sdhC).